A 387-amino-acid chain; its full sequence is Protein REVEILLE 1 (387 aa).

Composition is skewed to polar residues over residues M1–L17 and K27–G37. The disordered stretch occupies residues M1–K44. Residues T50 to A104 enclose the HTH myb-type domain. A DNA-binding region (H-T-H motif) is located at residues W77–F100. Disordered stretches follow at residues R105–A200, K306–P334, and A350–L387. Residues R124 to P134 are compositionally biased toward basic residues. Polar residues predominate over residues A141–G166. Low complexity-rich tracts occupy residues S172 to A200 and G312 to D323. Basic and acidic residues predominate over residues D324–E333.

Its subcellular location is the nucleus. Morning-phased transcription factor integrating the circadian clock and auxin pathways. Binds to the evening element (EE) of promoters. Does not act within the central clock, but regulates free auxin levels in a time-of-day specific manner. Positively regulates the expression of YUC8 during the day, but has no effect during the night. Negative regulator of freezing tolerance. In Arabidopsis thaliana (Mouse-ear cress), this protein is Protein REVEILLE 1 (RVE1).